The sequence spans 359 residues: tRNA N6-adenosine threonylcarbamoyltransferase (359 aa).

Residues H115 and H119 each coordinate Fe cation. Substrate is bound by residues L137–G141, D170, G183, and N283. D311 is a Fe cation binding site. The disordered stretch occupies residues A328–A359.

The protein belongs to the KAE1 / TsaD family. Requires Fe(2+) as cofactor.

It is found in the cytoplasm. The enzyme catalyses L-threonylcarbamoyladenylate + adenosine(37) in tRNA = N(6)-L-threonylcarbamoyladenosine(37) in tRNA + AMP + H(+). In terms of biological role, required for the formation of a threonylcarbamoyl group on adenosine at position 37 (t(6)A37) in tRNAs that read codons beginning with adenine. Is involved in the transfer of the threonylcarbamoyl moiety of threonylcarbamoyl-AMP (TC-AMP) to the N6 group of A37, together with TsaE and TsaB. TsaD likely plays a direct catalytic role in this reaction. The sequence is that of tRNA N6-adenosine threonylcarbamoyltransferase from Brucella canis (strain ATCC 23365 / NCTC 10854 / RM-666).